Here is a 270-residue protein sequence, read N- to C-terminus: Cytosolic Fe-S cluster assembly factor NUBP2 homolog (270 aa).

21 to 28 serves as a coordination point for ATP; it reads GKGGVGKS. The [4Fe-4S] cluster site is built by Cys195 and Cys198.

This sequence belongs to the Mrp/NBP35 ATP-binding proteins family. NUBP2/CFD1 subfamily. Heterotetramer of 2 NUBP1 and 2 NUBP2 chains. It depends on [4Fe-4S] cluster as a cofactor.

The protein localises to the cytoplasm. Functionally, component of the cytosolic iron-sulfur (Fe/S) protein assembly (CIA) machinery. Required for maturation of extramitochondrial Fe-S proteins. The NUBP1-NUBP2 heterotetramer forms a Fe-S scaffold complex, mediating the de novo assembly of an Fe-S cluster and its transfer to target apoproteins. The protein is Cytosolic Fe-S cluster assembly factor NUBP2 homolog of Nematostella vectensis (Starlet sea anemone).